The sequence spans 229 residues: Synaptogyrin-3 (229 aa).

Met1 bears the N-acetylmethionine mark. In terms of domain architecture, MARVEL spans 20–172; that stretch reads FARRPQTLLR…LTVKALQRFR (153 aa). The next 4 membrane-spanning stretches (helical) occupy residues 30–50, 70–90, 105–125, and 148–168; these read VVSWVFSIAVFGPIVNEGYVN, FGVVLGLGAFIACVAFLLLDV, VLLDLGFSGVWSFLWFVGFCF, and AAIAFSFFSILSWVALTVKAL. Positions 209-223 are enriched in polar residues; sequence QSPPFTETLDTSSKG. Residues 209–229 are disordered; sequence QSPPFTETLDTSSKGYQVPAY.

Belongs to the synaptogyrin family. As to quaternary structure, interacts (via N-terminus) with SLC6A3 (via N-terminus). May interact with VMAT2. Specifically expressed in brain. Found in the brain across the dorsal and ventral corpus striatum as well as in the cortex.

It is found in the cytoplasmic vesicle. The protein localises to the secretory vesicle. Its subcellular location is the synaptic vesicle membrane. It localises to the synapse. Functionally, may play a role in regulated exocytosis. May indirectly regulate the activity of the plasma membrane dopamine transporter SLC6A3 and thereby regulate dopamine transport back from the synaptic cleft into the presynaptic terminal. The chain is Synaptogyrin-3 from Mus musculus (Mouse).